Reading from the N-terminus, the 123-residue chain is Acidic phospholipase A2 (123 aa).

Disulfide bonds link cysteine 26–cysteine 116, cysteine 28–cysteine 44, cysteine 43–cysteine 95, cysteine 49–cysteine 123, cysteine 50–cysteine 88, cysteine 57–cysteine 81, and cysteine 75–cysteine 86. Positions 27, 29, and 31 each coordinate Ca(2+). Histidine 47 is an active-site residue. Aspartate 48 is a Ca(2+) binding site. Residue aspartate 89 is part of the active site.

It belongs to the phospholipase A2 family. Group II subfamily. D49 sub-subfamily. In terms of assembly, homodimer. It depends on Ca(2+) as a cofactor. As to expression, expressed by the venom gland.

Its subcellular location is the secreted. The catalysed reaction is a 1,2-diacyl-sn-glycero-3-phosphocholine + H2O = a 1-acyl-sn-glycero-3-phosphocholine + a fatty acid + H(+). Snake venom phospholipase A2 (PLA2) that inhibits ADP-induced platelet aggregation. PLA2 catalyzes the calcium-dependent hydrolysis of the 2-acyl groups in 3-sn-phosphoglycerides. The chain is Acidic phospholipase A2 from Deinagkistrodon acutus (Hundred-pace snake).